The sequence spans 321 residues: Protein ABIL3 (321 aa).

Disordered regions lie at residues 179-273 (TIRE…RSAS) and 279-298 (EKEA…SKRL). 2 stretches are compositionally biased toward low complexity: residues 204–215 (SATFSFSSIATA) and 240–255 (IRPS…SKSR). The span at 279 to 288 (EKEAQKEPEH) shows a compositional bias: basic and acidic residues.

This sequence belongs to the ABI family. In terms of assembly, binds SCAR.

It is found in the cytoplasm. The protein localises to the cytoskeleton. Involved in regulation of actin and microtubule organization. Part of a WAVE complex that activates the Arp2/3 complex. This Arabidopsis thaliana (Mouse-ear cress) protein is Protein ABIL3 (ABIL3).